The chain runs to 238 residues: DnaA regulatory inactivator Hda (238 aa).

Belongs to the DnaA family. HdA subfamily. In terms of assembly, the active form seems to be an ADP-bound monomer. Forms the RIDA complex (regulatory inactivation of DnaA) of ATP-DnaA, ADP-Hda and the DNA-loaded beta sliding clamp (dnaN).

In terms of biological role, mediates the interaction of DNA replication initiator protein DnaA with DNA polymerase subunit beta sliding clamp (dnaN). Stimulates hydrolysis of ATP-DnaA to ADP-DnaA, rendering DnaA inactive for reinitiation, a process called regulatory inhibition of DnaA or RIDA. The protein is DnaA regulatory inactivator Hda of Pectobacterium atrosepticum (strain SCRI 1043 / ATCC BAA-672) (Erwinia carotovora subsp. atroseptica).